The following is a 567-amino-acid chain: Phosphoglucomutase-like protein 5 (567 aa).

The interval 1 to 26 (MEGSPIPVLTVPTAPYEDQRPTGGGG) is disordered. Thr120 is modified (phosphothreonine). Ser122 bears the Phosphoserine mark.

This sequence belongs to the phosphohexose mutase family. Interacts with DMD/dystrophin; the interaction is direct. Interacts with UTRN/utrophin.

The protein resides in the cell junction. Its subcellular location is the adherens junction. The protein localises to the cytoplasm. It localises to the cytoskeleton. It is found in the cell membrane. The protein resides in the sarcolemma. Its function is as follows. Component of adherens-type cell-cell and cell-matrix junctions. Has no phosphoglucomutase activity in vitro. In Mus musculus (Mouse), this protein is Phosphoglucomutase-like protein 5.